The chain runs to 445 residues: Phosphoglucosamine mutase (445 aa).

Residue Ser102 is the Phosphoserine intermediate of the active site. Residues Ser102, Asp241, Asp243, and Asp245 each coordinate Mg(2+). Ser102 is subject to Phosphoserine.

This sequence belongs to the phosphohexose mutase family. It depends on Mg(2+) as a cofactor. Activated by phosphorylation.

It carries out the reaction alpha-D-glucosamine 1-phosphate = D-glucosamine 6-phosphate. Catalyzes the conversion of glucosamine-6-phosphate to glucosamine-1-phosphate. The chain is Phosphoglucosamine mutase from Enterobacter sp. (strain 638).